The primary structure comprises 426 residues: Serine/threonine-protein kinase SRPK (426 aa).

Over residues 1 to 23 (MENIFKEKEKGKEKAKEEEKEND) the composition is skewed to basic and acidic residues. The tract at residues 1–40 (MENIFKEKEKGKEKAKEEEKENDSGDLFDSEDEGTEDYKK) is disordered. Over residues 24–35 (SGDLFDSEDEGT) the composition is skewed to acidic residues. Residues 56–419 (YRIVKKLGWG…ARDSLEHPYM (364 aa)) enclose the Protein kinase domain. Residues 62–70 (LGWGHFSTV) and Lys86 each bind ATP. Asp188 acts as the Proton acceptor in catalysis. Residues 318–328 (PKKGDKYDKTD) carry the Nuclear localization signal motif.

This sequence belongs to the protein kinase superfamily. CMGC Ser/Thr protein kinase family.

The protein resides in the nucleus. It carries out the reaction L-seryl-[protein] + ATP = O-phospho-L-seryl-[protein] + ADP + H(+). It catalyses the reaction L-threonyl-[protein] + ATP = O-phospho-L-threonyl-[protein] + ADP + H(+). Phosphorylates serine/arginine-rich protein PSR. The chain is Serine/threonine-protein kinase SRPK from Physarum polycephalum (Slime mold).